Here is a 591-residue protein sequence, read N- to C-terminus: MESTLKDIRDGASVLDLDPKATVGGGVEDLYGEDFATEDQLVTPWTVSVASGYSLLRDPRHNKGLAFNDKERDAHYLCGLLPPVVSTQELQERKLMNSIRQYQVPLQKYMAMMDLQERNERLFYKLLIDNVEELLPVVYTPTVGEACQKYGSIFRRPQGLYISLKEKGKILEVLKNWPERRIQVIVVTDGERILGLGDLGCQGMGIPVGKLSLYTALGGVRPSACLPITIDVGTNNEKLLANEFYIGLKQRRATGKEYSEFLQEFMSPVKQNYGEKVLIQFEDFANHNAFDLLAKYGTTHLAFNDDIQGTASVVLAGIVSALRLLGGTLADHKFLFLGAGEAGTGIAELIALEMSKQTKCPIEETRKKIWLVDSKGLIVGSRKDSLQQFKKPWAHEHEPVKDLLDAVKVIKPTVLIGSSGVGKAFTKEVIEAMASCNEKPLILALSNPTSQSECTAEEAYTWTQGRAIFASGSPFDPVEYNGKTFVPGQANNAYIFPGLGMGLVISGAIRVHDEMLLAASEALARQVTQENFDKGLIYPPFSNIRKISAHIAANVAAKAYELGLATRLPQPENLVKYAESCMYSPVYRSYR.

The Proton donor role is filled by Tyr-139. Arg-192 serves as a coordination point for NAD(+). Lys-210 functions as the Proton acceptor in the catalytic mechanism. Residues Glu-282, Asp-283, and Asp-306 each coordinate a divalent metal cation. Asp-306 contacts NAD(+). 335 to 351 (LFLGAGEAGTGIAELIA) is a binding site for NADP(+). Asn-447 serves as a coordination point for NAD(+).

Belongs to the malic enzymes family. Homotetramer. Mg(2+) serves as cofactor. Requires Mn(2+) as cofactor.

The protein resides in the cytoplasm. It carries out the reaction (S)-malate + NADP(+) = pyruvate + CO2 + NADPH. The catalysed reaction is oxaloacetate + H(+) = pyruvate + CO2. This Vitis vinifera (Grape) protein is NADP-dependent malic enzyme.